The sequence spans 266 residues: Putative tyrosine phosphatase 197R (266 aa).

Residues 15 to 167 enclose the Tyrosine-protein phosphatase domain; sequence RPTLGSLSDK…LFGSQNINND (153 aa). Cys111 acts as the Phosphocysteine intermediate in catalysis.

This sequence belongs to the protein-tyrosine phosphatase family.

The catalysed reaction is O-phospho-L-tyrosyl-[protein] + H2O = L-tyrosyl-[protein] + phosphate. In Invertebrate iridescent virus 6 (IIV-6), this protein is Putative tyrosine phosphatase 197R.